The chain runs to 583 residues: Vivapain-1 (583 aa).

The Cytoplasmic portion of the chain corresponds to 1 to 34; the sequence is MAQDIKIMNLTKSSLEALNRNQMLSKKSSRKILK. A propeptide spans 1–338 (activation peptide); that stretch reads MAQDIKIMNL…SSSGANLLAD (338 aa). Residues 35–55 traverse the membrane as a helical; Signal-anchor for type II membrane protein segment; sequence ICMYAILTFAMCGVVLICLTA. The Lumenal segment spans residues 56–583; sequence MSNSDGSLTQ…IGVEVFYPIL (528 aa). Residues 62 to 82 are compositionally biased toward polar residues; it reads SLTQSGSHNQSGSLKGLSSTP. 2 disordered regions span residues 62-83 and 104-125; these read SLTQ…STPG and PHGN…ALPN. Asn-70 carries an N-linked (GlcNAc...) asparagine glycan. Residues 106–119 show a composition bias toward basic and acidic residues; sequence GNRDPTGDDVEKPA. Residues Asn-195 and Asn-272 are each glycosylated (N-linked (GlcNAc...) asparagine). 3 cysteine pairs are disulfide-bonded: Cys-360/Cys-402, Cys-395/Cys-435, and Cys-420/Cys-440. The active site involves Cys-363. N-linked (GlcNAc...) asparagine glycosylation occurs at Asn-381. N-linked (GlcNAc...) asparagine glycosylation is found at Asn-486 and Asn-494. Cys-489 and Cys-572 are disulfide-bonded. Active-site residues include His-495 and Asn-547.

Belongs to the peptidase C1 family.

It is found in the membrane. In terms of biological role, cysteine protease. This is Vivapain-1 from Plasmodium vivax (strain Salvador I).